The sequence spans 473 residues: Aspartyl/glutamyl-tRNA(Asn/Gln) amidotransferase subunit B (473 aa).

This sequence belongs to the GatB/GatE family. GatB subfamily. As to quaternary structure, heterotrimer of A, B and C subunits.

It catalyses the reaction L-glutamyl-tRNA(Gln) + L-glutamine + ATP + H2O = L-glutaminyl-tRNA(Gln) + L-glutamate + ADP + phosphate + H(+). The catalysed reaction is L-aspartyl-tRNA(Asn) + L-glutamine + ATP + H2O = L-asparaginyl-tRNA(Asn) + L-glutamate + ADP + phosphate + 2 H(+). Its function is as follows. Allows the formation of correctly charged Asn-tRNA(Asn) or Gln-tRNA(Gln) through the transamidation of misacylated Asp-tRNA(Asn) or Glu-tRNA(Gln) in organisms which lack either or both of asparaginyl-tRNA or glutaminyl-tRNA synthetases. The reaction takes place in the presence of glutamine and ATP through an activated phospho-Asp-tRNA(Asn) or phospho-Glu-tRNA(Gln). This is Aspartyl/glutamyl-tRNA(Asn/Gln) amidotransferase subunit B from Levilactobacillus brevis (strain ATCC 367 / BCRC 12310 / CIP 105137 / JCM 1170 / LMG 11437 / NCIMB 947 / NCTC 947) (Lactobacillus brevis).